A 227-amino-acid chain; its full sequence is MGAVMGTFSSLQTKQRRPSKDIAWWYYQYQRDKIEDELEMTMVCHRPEGLEQLEAQTNFTKRELQVLYRGFKNECPSGVVNEDTFKQIYAQFFPHGDASTYAHYLFNAFDTTQTGSVKFEDFVTALSILLRGTVHEKLRWTFNLYDINKDGYINKEEMMDIVKAIYDMMGKYTYPVLKEDTPRQHVDVFFQKMDKNKDGIVTLDEFLESCQEDDNIMRSLQLFQNVM.

Residues 38–94 (LEMTMVCHRPEGLEQLEAQTNFTKRELQVLYRGFKNECPSGVVNEDTFKQIYAQFFP) form the EF-hand 1; degenerate domain. EF-hand domains follow at residues 97–132 (DASTYAHYLFNAFDTTQTGSVKFEDFVTALSILLRG), 133–168 (TVHEKLRWTFNLYDINKDGYINKEEMMDIVKAIYDM), and 181–216 (TPRQHVDVFFQKMDKNKDGIVTLDEFLESCQEDDNI). 9 residues coordinate Ca(2+): aspartate 146, asparagine 148, aspartate 150, tyrosine 152, glutamate 157, aspartate 194, asparagine 196, aspartate 198, and glutamate 205. Residues 214 to 227 (DNIMRSLQLFQNVM) form an interaction with KCND2 region.

Belongs to the recoverin family. In terms of assembly, component of heteromultimeric potassium channels. Identified in potassium channel complexes containing KCND1, KCND2, KCND3, KCNIP1, KCNIP2, KCNIP3, KCNIP4, DPP6 and DPP10. Part of a heterooctamer composed of the tetrameric channel and four KCNIP1 chains. Probably part of a complex consisting of KCNIP1, KCNIP2 isoform 3 and KCND2. Self-associates to form homodimers and homotetramers. Interacts with KCNIP2 isoform 3 in a calcium-dependent manner. Interacts with Naja atra venom CTX3. Interacts with KCND2; this interaction mediates the capture of both the N- and C-terminus of KCND2, thus preventing KCND2 N-type inactivation and modulates the channel gating kinetics. Interacts with KCND3; each KCNIP1 monomer interacts with two adjacent KCND3 subunits, through both the N-terminal inactivation ball of a KCND3 subunit and a C-terminal helix from the adjacent KCND3 subunit, clamping them together; this interaction stabilizes the tetrameric form and modulates the channel gating kinetics namely channel activation and inactivation kinetics and rate of recovery from inactivation. In terms of tissue distribution, isoform 1 and isoform 2 are expressed in brain and kidney. Isoform 1 is also expressed in liver, pancreas, skeletal muscle, small intestine and testis. Isoform 2 is also expressed in lung, pancreas, leukocytes, prostate and thymus.

It is found in the cell membrane. It localises to the cytoplasm. Its subcellular location is the cell projection. The protein localises to the dendrite. Regulatory subunit of Kv4/D (Shal)-type voltage-gated rapidly inactivating A-type potassium channels. Regulates channel density, inactivation kinetics and rate of recovery from inactivation in a calcium-dependent and isoform-specific manner. In vitro, modulates KCND1/Kv4.1 and KCND2/Kv4.2 currents. Increases the presence of KCND2 at the cell surface. The polypeptide is A-type potassium channel modulatory protein KCNIP1 (Homo sapiens (Human)).